We begin with the raw amino-acid sequence, 387 residues long: EARP and GARP complex-interacting protein 1 (387 aa).

Met-1 carries the post-translational modification N-acetylmethionine. WD repeat units lie at residues Asp-4–Phe-48, Ile-55–Met-101, Glu-124–Leu-164, Val-172–Thr-214, Gln-219–Thr-258, and Glu-263–Met-302. Positions Phe-310–Leu-335 are disordered. Ser-320 carries the phosphoserine modification. The segment covering Gln-322 to Leu-335 has biased composition (basic and acidic residues). One copy of the WD 7 repeat lies at Asn-338 to Arg-379.

The protein belongs to the WD repeat EIPR1 family. As to quaternary structure, interacts with two multisubunit tethering complexes: EARP composed of VPS50, VPS51, VPS52 and VPS53 subunits and GARP complex composed of VPS51, VPS52, VPS53 and VPS54 subunits. Interacts with SNAP29.

It is found in the golgi apparatus. The protein localises to the trans-Golgi network. Acts as a component of endosomal retrieval machinery that is involved in protein transport from early endosomes to either recycling endosomes or the trans-Golgi network. Mediates the recruitment of Golgi-associated retrograde protein (GARP) complex to the trans-Golgi network and controls early endosome-to-Golgi transport of internalized protein. Promotes the recycling of internalized transferrin receptor (TFRC) to the plasma membrane through interaction with endosome-associated recycling protein (EARP) complex. Controls proper insulin distribution and secretion, and retention of cargo in mature dense core vesicles. Required for the stability of the endosome-associated retrograde protein (EARP) complex subunits and for proper localization and association of EARP with membranes. This chain is EARP and GARP complex-interacting protein 1, found in Homo sapiens (Human).